The sequence spans 778 residues: MSEMQQPWSLVGLTEAEYRRVVEILGREPNPTELHMFGVMWSEHCAYKHSKAALRRLPTRGEHVLQGPGENAGVVRIDDDLAVAFKLESHNHPSFVDPFNGAATGVGGILRDVFTMGARPVATLNSLRFGPLDEPKQRELLRGVVAGIGHYGNTVGVPCIGGEVYFDESYRGNCLVNAMCIGILRPDRIHRGIAAGPGNAIMVVGNPTGRDGIHAASLLASAEFSGSEAEAALPTVPVGDPFAEKMLMEACLELFETDAVVGIQDMGAAGLISSSSEMAARGGVGVELDVRKVPAREEGMEPWEFLLSESQERMLVCVKKGREAEVEAICRKWGVGCAVIGRVTDDGMVRVLDDGRVVAEVPARALAEAPVYHPAKAEPAYLAELRAFDWSRLPEPEDWNETLLRLLGSPNIGARAWIYEQFDHMVQAGTVLGPGGDAGVIRLGAAVAPGAHGLTRQPPGEGLPGRSGQAGPPKGIAASVDCNGRYVYLNPRRGTAIAVAEAARNCVVTGARPVAITNNCNFGNPEKPEIFWTFDEAITGMAEACEALGTPVTGGNVSFYNETSGEAIHPTPTIGMIAVHENLDRLTTPGFKQVGDVILLLGETRDELGGSEYARLIHGVLAGDAPALDLAFEKRLQDVVLRAIHEGLVTAAHDVAEGGLAVALAEMAIAAAEPSLGCQVSIFLGEGRVDGQLFGESQSRILVTATREQVGRLQALLMVEQIPFRVLGDVTADGRFRLAALAPGSGSAHVYRRQELIDLPVADLVRAHKEAIPRWMDA.

Residue His-44 is part of the active site. ATP contacts are provided by Tyr-47 and Lys-86. Mg(2+) is bound at residue Glu-88. Substrate-binding positions include 89-92 (SHNH) and Arg-111. His-90 (proton acceptor) is an active-site residue. Asp-112 and Asp-265 together coordinate Mg(2+). 309 to 311 (ESQ) contributes to the substrate binding site. The tract at residues 455–474 (TRQPPGEGLPGRSGQAGPPK) is disordered. Asn-518 and Gly-555 together coordinate ATP. Asn-556 contacts Mg(2+). Ser-558 lines the substrate pocket.

Belongs to the FGAMS family. As to quaternary structure, monomer. Part of the FGAM synthase complex composed of 1 PurL, 1 PurQ and 2 PurS subunits.

It localises to the cytoplasm. It catalyses the reaction N(2)-formyl-N(1)-(5-phospho-beta-D-ribosyl)glycinamide + L-glutamine + ATP + H2O = 2-formamido-N(1)-(5-O-phospho-beta-D-ribosyl)acetamidine + L-glutamate + ADP + phosphate + H(+). It functions in the pathway purine metabolism; IMP biosynthesis via de novo pathway; 5-amino-1-(5-phospho-D-ribosyl)imidazole from N(2)-formyl-N(1)-(5-phospho-D-ribosyl)glycinamide: step 1/2. Part of the phosphoribosylformylglycinamidine synthase complex involved in the purines biosynthetic pathway. Catalyzes the ATP-dependent conversion of formylglycinamide ribonucleotide (FGAR) and glutamine to yield formylglycinamidine ribonucleotide (FGAM) and glutamate. The FGAM synthase complex is composed of three subunits. PurQ produces an ammonia molecule by converting glutamine to glutamate. PurL transfers the ammonia molecule to FGAR to form FGAM in an ATP-dependent manner. PurS interacts with PurQ and PurL and is thought to assist in the transfer of the ammonia molecule from PurQ to PurL. The chain is Phosphoribosylformylglycinamidine synthase subunit PurL from Symbiobacterium thermophilum (strain DSM 24528 / JCM 14929 / IAM 14863 / T).